Here is a 223-residue protein sequence, read N- to C-terminus: Probable cell wall protein PGA61 (223 aa).

Positions 1–16 are cleaved as a signal peptide; it reads MKSGLLLAVILPVAFA. The N-linked (GlcNAc...) asparagine glycan is linked to Asn-25. The disordered stretch occupies residues 83-134; sequence GAPSSSSTPTSSTETTSSTEAETTEAETTEQPSSSTSSNTESSKTTILETPS. 2 stretches are compositionally biased toward low complexity: residues 84 to 103 and 111 to 128; these read APSSSSTPTSSTETTSSTEA and TEQPSSSTSSNTESSKTT. Asn-188 is a glycosylation site (N-linked (GlcNAc...) asparagine). Asn-202 carries GPI-anchor amidated asparagine lipidation. Residues 203-223 constitute a propeptide, removed in mature form; sequence GAGRAAVIGSGSLLALLLNFI.

The protein belongs to the IHD1 family. In terms of processing, the GPI-anchor is attached to the protein in the endoplasmic reticulum and serves to target the protein to the cell surface. There, the glucosamine-inositol phospholipid moiety is cleaved off and the GPI-modified mannoprotein is covalently attached via its lipidless GPI glycan remnant to the 1,6-beta-glucan of the outer cell wall layer.

Its subcellular location is the secreted. It is found in the cell wall. The protein localises to the membrane. Functionally, probable GPI-anchored cell wall protein that may be involved in cell wall organization, hyphal growth, as well as in virulence. The polypeptide is Probable cell wall protein PGA61 (PGA61) (Candida albicans (strain SC5314 / ATCC MYA-2876) (Yeast)).